A 315-amino-acid polypeptide reads, in one-letter code: Isoaspartyl peptidase/L-asparaginase 1 (315 aa).

Ser169 is modified (phosphoserine). Residue Thr183 is the Nucleophile of the active site. Substrate contacts are provided by residues 211-214 and 233-236; these read RIGD and TGKG.

It belongs to the Ntn-hydrolase family. Heterotetramer of two alpha and two beta chains arranged as a dimer of alpha/beta heterodimers. Cleaved into an alpha and beta chain by autocatalysis; this activates the enzyme. The N-terminal residue of the beta subunit is responsible for the nucleophile hydrolase activity.

The catalysed reaction is Cleavage of a beta-linked Asp residue from the N-terminus of a polypeptide.. Functionally, acts in asparagine catabolism but also in the final steps of protein and degradation via hydrolysis of a range of isoaspartyl dipeptides. The affinity for Asn and at least 4 isoaspartyl dipeptides (L-beta-Asp-Ala, L-beta-Asp-Gly, L-beta-Asp-Leu, L-beta-Asp-Phe) is quite low, KM being greater than 4.0 mM. The enzyme is inactive on alpha-aspartyl dipeptides. This chain is Isoaspartyl peptidase/L-asparaginase 1, found in Arabidopsis thaliana (Mouse-ear cress).